The following is a 252-amino-acid chain: Methionine aminopeptidase (252 aa).

Position 76 (histidine 76) interacts with substrate. A divalent metal cation is bound by residues aspartate 93, aspartate 104, and histidine 168. Histidine 175 is a binding site for substrate. Residues glutamate 202 and glutamate 233 each coordinate a divalent metal cation.

It belongs to the peptidase M24A family. Methionine aminopeptidase type 1 subfamily. As to quaternary structure, monomer. Co(2+) serves as cofactor. Zn(2+) is required as a cofactor. Requires Mn(2+) as cofactor. It depends on Fe(2+) as a cofactor.

It carries out the reaction Release of N-terminal amino acids, preferentially methionine, from peptides and arylamides.. Removes the N-terminal methionine from nascent proteins. The N-terminal methionine is often cleaved when the second residue in the primary sequence is small and uncharged (Met-Ala-, Cys, Gly, Pro, Ser, Thr, or Val). Requires deformylation of the N(alpha)-formylated initiator methionine before it can be hydrolyzed. This chain is Methionine aminopeptidase, found in Staphylococcus aureus (strain MRSA252).